Reading from the N-terminus, the 260-residue chain is MLYNIPILTHLYEIRLRIIYLLYSIFLTCFCSYQYKEEIFYLLFIPLSKNFIYTDLIEAFITYIKLSIIVGIYLSYPIFLYQIWSFLIPGFFLYEKKLFRLLCLTSIFLYFLGSCIGYYLLFPIAFTFFLGFQKLGKDQLFTIELQAKIHEYLILNTKLIFSLSICFQLPVLILFLFKIYPKTYLWLIHKRRFIYLFFFILAAILSPPDILSQFILVIPLILFFEISLFCIKLIQKYNSFMEPIGFEPTASCLQSTRSTI.

Helical transmembrane passes span 39-59 (IFYLLFIPLSKNFIYTDLIEA), 68-88 (IIVGIYLSYPIFLYQIWSFLI), 111-131 (FLGSCIGYYLLFPIAFTFFLG), 159-179 (LIFSLSICFQLPVLILFLFKI), 193-213 (FIYLFFFILAAILSPPDILSQ), and 214-234 (FILVIPLILFFEISLFCIKLI).

The protein belongs to the TatC family.

The protein resides in the mitochondrion membrane. This is an uncharacterized protein from Reclinomonas americana.